A 72-amino-acid chain; its full sequence is MDSYPESLKKETEEIKERVRNGNIKEDKIKEIAETTVEFLKSEEKRHKYFSEVAAAMADNLSEFFKSYLKGE.

This Bacillus subtilis (strain 168) protein is SPbeta prophage-derived uncharacterized protein YorV (yorV).